The following is a 495-amino-acid chain: Glutamyl-tRNA(Gln) amidotransferase subunit A (495 aa).

Catalysis depends on charge relay system residues lysine 75 and serine 150. The Acyl-ester intermediate role is filled by serine 174.

This sequence belongs to the amidase family. GatA subfamily. As to quaternary structure, heterotrimer of A, B and C subunits.

It carries out the reaction L-glutamyl-tRNA(Gln) + L-glutamine + ATP + H2O = L-glutaminyl-tRNA(Gln) + L-glutamate + ADP + phosphate + H(+). In terms of biological role, allows the formation of correctly charged Gln-tRNA(Gln) through the transamidation of misacylated Glu-tRNA(Gln) in organisms which lack glutaminyl-tRNA synthetase. The reaction takes place in the presence of glutamine and ATP through an activated gamma-phospho-Glu-tRNA(Gln). The chain is Glutamyl-tRNA(Gln) amidotransferase subunit A from Ralstonia nicotianae (strain ATCC BAA-1114 / GMI1000) (Ralstonia solanacearum).